The sequence spans 1480 residues: MGPIRPALAPWPRHLLRCVLLLGGLRLGHPADSAAALLEPDVFLIFSQGMQGCLEAQGVQVRVIPVCNASLPAQRWKWVSRNRLFNLGAMQCLGTGWPATNTTVSLGMYECDREALSLRWQCRTLGDQLSLLLGARANNASKPGTLERGDQTRSGHWNIYGSEEDLCARPYYEVYTIQGNSHGKPCTIPFKYDNQWFHGCTSTGREDGHLWCATTQDYGKDERWGFCPIKSNDCETFWDKDQLTDSCYQFNFQSTLSWREAWASCEQQGADLLSITEIHEQTYINGLLTGYSSTLWIGLNDLDTSGGWQWSDNSPLKYLNWESDQPDNPGEENCGVIRTESSGGWQNHDCSIALPYVCKKKPNATAEPIQPDRWANVKVECDPSWQPFQGHCYRLQAEKRSWQESKRACLRGGGDLLSIHSMTELEFITKQIKQEVEELWIGLNDLKLQMNFEWSDGSLVSFTHWHPFEPNNFRDSLEDCVTIWGPEGRWNDSPCNQSLPSICKKAGRLSQGTAEEDHGCRKGWTWHSPSCYWLGEDQVIYSDARRLCTDHGSQLVTITNRFEQAFVSSLIYNWEGEYFWTALQDLNSTGSFRWLSGDEVMYTHWNRDQPGYRRGGCVALATGSAMGLWEVKNCTSFRARYICRQSLGTPVTPELPGPDPTPSLTGSCPQGWVSDPKLRHCYKVFSSERLQEKKSWIEALGVCRELGAQLLSLASYEEEHFVANMLNKIFGESEPENHEQHWFWIGLNRRDPREGHSWRWSDGLGFSYHNFARSQHDDDNIRGCAVLDLASLQWVAMQCQTQLDWICKIPRGVDVREPDIGRQGRLEWVRFQEAEYKFFEHHSSWAQAQRICTWFQAELTSVHSQAELDFLGQNMQKLSSDQEQHWWIGLHTSESDGRFRWSDGSVINFVSWAPGKPRPIGKDKKCVYMTARQEDWGDQRCHTALPYICKRSNSSGETRPHDLPPSTLGGCPSGWNQFLNKCFRIQGQDPQDRVKWSEAQFSCEQQEAQLVTIANPLEQAYITASLPNVTFDLWIGLHGSQRDFQWIEQEPLLYTNWAPGEPSGPSPAPSGTKPTSCAVILHSPSAHFTGRWDDRSCTEETHGFICQKGTDPSLSPSPAAALPAPGTELSYLNRTFRLLQKPLRWKDALLLCESRNASLAHVPDPYTQAFLTQAARGLQAPLWIGLASEEGSRRYSWLSEEPLNYASWQDGEPQHTGGCAYVDVDGTWRTTSCDTKLQGAVCGVSRGPPPPRISYRGSCPQGLADSSWIPFREHCYSFHTELLLGHKEALQRCQRAGGTVLSILDEMENVFVWEHLQTAETQSRGAWLGMNFNPKGGMLVWQDNTAVNYSNWGPPGLGPSMLSHNSCYWIQSSSGLWRPGACTNVTMGVVCKLPRVEENGFLPSAALPENPVALVVVLTAAVLLLLALLTGALILYRRRQSAERGSFEGARYSRSSRSGPAEATEKNILVSDMEMNEQQE.

A signal peptide spans 1-30 (MGPIRPALAPWPRHLLRCVLLLGGLRLGHP). The Extracellular segment spans residues 31–1413 (ADSAAALLEP…SAALPENPVA (1383 aa)). The Ricin B-type lectin domain occupies 40 to 166 (PDVFLIFSQG…WNIYGSEEDL (127 aa)). 2 disulfides stabilise this stretch: Cys53/Cys67 and Cys92/Cys111. N-linked (GlcNAc...) asparagine glycosylation is found at Asn101 and Asn139. In terms of domain architecture, Fibronectin type-II spans 181-229 (SHGKPCTIPFKYDNQWFHGCTSTGREDGHLWCATTQDYGKDERWGFCPI). 4 disulfides stabilise this stretch: Cys186–Cys212, Cys200–Cys227, Cys265–Cys358, and Cys334–Cys350. In terms of domain architecture, C-type lectin 1 spans 243-359 (LTDSCYQFNF…CSIALPYVCK (117 aa)). Asn363 carries N-linked (GlcNAc...) asparagine glycosylation. 7 C-type lectin domains span residues 388-504 (FQGH…SICK), 527-643 (HSPS…RYIC), 677-808 (KLRH…WICK), 831-950 (FQEA…YICK), 978-1106 (FLNK…GFIC), 1131-1242 (YLNR…GAVC), and 1271-1391 (FREH…GVVC). 7 cysteine pairs are disulfide-bonded: Cys409–Cys503, Cys480–Cys495, Cys617–Cys634, Cys703–Cys807, Cys784–Cys799, Cys852–Cys949, and Cys926–Cys941. Residue Asn1028 is glycosylated (N-linked (GlcNAc...) asparagine). Cys1077 and Cys1097 form a disulfide bridge. Lys1141 is covalently cross-linked (Glycyl lysine isopeptide (Lys-Gly) (interchain with G-Cter in SUMO1)). A disulfide bond links Cys1219 and Cys1233. Asn1348 carries an N-linked (GlcNAc...) asparagine glycan. Cysteines 1367 and 1382 form a disulfide. Residues 1414–1434 (LVVVLTAAVLLLLALLTGALI) traverse the membrane as a helical segment. The Cytoplasmic segment spans residues 1435-1480 (LYRRRQSAERGSFEGARYSRSSRSGPAEATEKNILVSDMEMNEQQE). The interval 1446–1480 (SFEGARYSRSSRSGPAEATEKNILVSDMEMNEQQE) is disordered.

Interacts directly with PLAUR/UPAR and PLAU/pro-UPA to form a tri-molecular complex. Interacts with collagen V. Interacts with C-terminal region of type I collagen/COL1A1. N-glycosylated. In terms of processing, phosphorylated.

The protein resides in the cell membrane. May play a role as endocytotic lectin receptor displaying calcium-dependent lectin activity. Internalizes glycosylated ligands from the extracellular space for release in an endosomal compartment via clathrin-mediated endocytosis. May be involved in plasminogen activation system controlling the extracellular level of PLAUR/PLAU, and thus may regulate protease activity at the cell surface. May contribute to cellular uptake, remodeling and degradation of extracellular collagen matrices. May participate in remodeling of extracellular matrix cooperating with the matrix metalloproteinases (MMPs) secreted by hepatic stellate cells. May mediate endocytosis of partially degraded collagens and glycoproteins produced in the extracellular matrix by MMPs. This chain is C-type mannose receptor 2 (Mrc2), found in Rattus norvegicus (Rat).